A 268-amino-acid polypeptide reads, in one-letter code: MEEEGLAIDDVQGRADLRRIDIDRVGIKGIRHPVRVRDRSLGEQHTVARFDMAVSLPHHFKGTHMSRFVEIINGHDREIDIASFEAMLAEMMQRLNAEAGRIEMRFPYFLEKRAPVTGVRSLMDYEVALIGEVSVATTTTWLGVTVPVTSLCPCSKAISERGAHNQRSHVTTAVRMRDFVWIEELIEWVEAEASSPIYGLLKRPDEKYVTEYAYDHPRFVEDLVRGVAARLDTEPRIAAYAVEVENFESIHNHSAYALIERDKRTADA.

Belongs to the GTP cyclohydrolase IV family.

The enzyme catalyses GTP + H2O = 7,8-dihydroneopterin 3'-triphosphate + formate + H(+). It functions in the pathway cofactor biosynthesis; 7,8-dihydroneopterin triphosphate biosynthesis; 7,8-dihydroneopterin triphosphate from GTP: step 1/1. In terms of biological role, converts GTP to 7,8-dihydroneopterin triphosphate. This is GTP cyclohydrolase FolE2 from Methylococcus capsulatus (strain ATCC 33009 / NCIMB 11132 / Bath).